We begin with the raw amino-acid sequence, 601 residues long: Aspartate--tRNA(Asp/Asn) ligase (601 aa).

Glutamate 173 contributes to the L-aspartate binding site. The segment at 197-200 is aspartate; sequence QLFK. Arginine 219 lines the L-aspartate pocket. ATP contacts are provided by residues 219 to 221 and glutamine 228; that span reads RDE. Histidine 456 lines the L-aspartate pocket. Glutamate 490 is an ATP binding site. Arginine 497 serves as a coordination point for L-aspartate. 542 to 545 is a binding site for ATP; sequence GWDR. The segment at 566–601 is disordered; sequence GGGYDPLTQAPAPITAEQRRESGVDAVPDDETAPQA. Residues 592–601 show a composition bias toward acidic residues; it reads VPDDETAPQA.

It belongs to the class-II aminoacyl-tRNA synthetase family. Type 1 subfamily. In terms of assembly, homodimer.

It localises to the cytoplasm. It catalyses the reaction tRNA(Asx) + L-aspartate + ATP = L-aspartyl-tRNA(Asx) + AMP + diphosphate. Aspartyl-tRNA synthetase with relaxed tRNA specificity since it is able to aspartylate not only its cognate tRNA(Asp) but also tRNA(Asn). Reaction proceeds in two steps: L-aspartate is first activated by ATP to form Asp-AMP and then transferred to the acceptor end of tRNA(Asp/Asn). The chain is Aspartate--tRNA(Asp/Asn) ligase from Beutenbergia cavernae (strain ATCC BAA-8 / DSM 12333 / CCUG 43141 / JCM 11478 / NBRC 16432 / NCIMB 13614 / HKI 0122).